The sequence spans 442 residues: Syndecan-3 (442 aa).

Disordered stretches follow at residues 1 to 24 (MKPG…AAAG) and 57 to 87 (RPVD…SGYF). Over 1–387 (MKPGPPHRAG…SILERKEVLV (387 aa)) the chain is Extracellular. Residues 13–24 (HGAGAGAGAAAG) are compositionally biased toward gly residues. The span at 63–77 (GSGDDDSFPDDELDD) shows a compositional bias: acidic residues. O-linked (Xyl...) (glycosaminoglycan) serine glycans are attached at residues S80, S82, S84, and S91. O-linked (GalNAc) serine; by GALNT13 glycosylation is present at S108. Residues T109 and T110 are each glycosylated (O-linked (GalNAc) threonine; by GALNT13). Disordered stretches follow at residues 150 to 173 (EEPS…STGD), 225 to 326 (TTPE…ETTQ), and 340 to 367 (AAKA…AIDS). 3 stretches are compositionally biased toward low complexity: residues 156-173 (ATTV…STGD), 225-238 (TTPE…TAAV), and 275-286 (TLPLGTTAPGPT). O-linked (GalNAc) serine; by GALNT13 glycosylation occurs at S160. Residues T161, T162, and T169 are each glycosylated (O-linked (GalNAc) threonine; by GALNT13). Residue S170 is glycosylated (O-linked (GalNAc) serine; by GALNT13). An O-linked (GalNAc) threonine; by GALNT13 glycan is attached at T171. Over residues 288–299 (VAQTPTPETFLT) the composition is skewed to polar residues. S314 and S367 each carry an O-linked (Xyl...) (glycosaminoglycan) serine glycan. The chain crosses the membrane as a helical span at residues 388–408 (AVIVGGVVGALFAAFLVTLLI). 4 positions are modified to phosphotyrosine: Y409, Y419, Y431, and Y441. Residues 409–442 (YRMKKKDEGSYTLEEPKQASVTYQKPDKQEEFYA) are Cytoplasmic-facing. A disordered region spans residues 419–442 (YTLEEPKQASVTYQKPDKQEEFYA). Positions 433–442 (KPDKQEEFYA) are enriched in basic and acidic residues.

It belongs to the syndecan proteoglycan family. In terms of assembly, interacts with TIAM1. Interacts with PTN (via heparan sulfate chains); this interaction mediates the neurite outgrowth-promoting signal from PTN to the cytoskeleton of growing neurites; this interaction mediates osteoblast recruitment. Interacts with MDK; this interaction induces SDC3 clustering; this interaction induces neuronal cell adhesion and neurite outgrowth. In terms of processing, O-glycosylated within the Thr/Ser-rich region which could interact with lectin domains on other molecules. Expressed in the nervous system, the adrenal gland, and the spleen.

The protein resides in the cell membrane. Cell surface proteoglycan that may bear heparan sulfate. May have a role in the organization of cell shape by affecting the actin cytoskeleton, possibly by transferring signals from the cell surface in a sugar-dependent mechanism. The protein is Syndecan-3 (SDC3) of Homo sapiens (Human).